We begin with the raw amino-acid sequence, 156 residues long: MSRRHRAEKREINPDPKFGDTVVTKFMNAIMFEGKKSVAERIVYGALDQVQEKTKQEPVAVFHQALDNVAPHVEVRSRRVGGATYQVPVDVRPERRQALAIRWLISAARGRNEKTMVERLSGELLDASSNRGTAVKKREDTHKMAEANRAFSHYRW.

Belongs to the universal ribosomal protein uS7 family. In terms of assembly, part of the 30S ribosomal subunit. Contacts proteins S9 and S11.

Its function is as follows. One of the primary rRNA binding proteins, it binds directly to 16S rRNA where it nucleates assembly of the head domain of the 30S subunit. Is located at the subunit interface close to the decoding center, probably blocks exit of the E-site tRNA. The polypeptide is Small ribosomal subunit protein uS7 (Chelativorans sp. (strain BNC1)).